The following is a 192-amino-acid chain: Imidazoleglycerol-phosphate dehydratase (192 aa).

It belongs to the imidazoleglycerol-phosphate dehydratase family.

The protein localises to the cytoplasm. It carries out the reaction D-erythro-1-(imidazol-4-yl)glycerol 3-phosphate = 3-(imidazol-4-yl)-2-oxopropyl phosphate + H2O. Its pathway is amino-acid biosynthesis; L-histidine biosynthesis; L-histidine from 5-phospho-alpha-D-ribose 1-diphosphate: step 6/9. The sequence is that of Imidazoleglycerol-phosphate dehydratase from Methanocella arvoryzae (strain DSM 22066 / NBRC 105507 / MRE50).